Here is a 193-residue protein sequence, read N- to C-terminus: dTTP/UTP pyrophosphatase (193 aa).

Residue Asp75 is the Proton acceptor of the active site.

It belongs to the Maf family. YhdE subfamily. Requires a divalent metal cation as cofactor.

The protein localises to the cytoplasm. It catalyses the reaction dTTP + H2O = dTMP + diphosphate + H(+). The catalysed reaction is UTP + H2O = UMP + diphosphate + H(+). Nucleoside triphosphate pyrophosphatase that hydrolyzes dTTP and UTP. May have a dual role in cell division arrest and in preventing the incorporation of modified nucleotides into cellular nucleic acids. This is dTTP/UTP pyrophosphatase from Chlorobium phaeovibrioides (strain DSM 265 / 1930) (Prosthecochloris vibrioformis (strain DSM 265)).